A 371-amino-acid chain; its full sequence is Putative glutamate--cysteine ligase 2 (371 aa).

This sequence belongs to the glutamate--cysteine ligase type 2 family. YbdK subfamily.

The catalysed reaction is L-cysteine + L-glutamate + ATP = gamma-L-glutamyl-L-cysteine + ADP + phosphate + H(+). Functionally, ATP-dependent carboxylate-amine ligase which exhibits weak glutamate--cysteine ligase activity. In Paraburkholderia xenovorans (strain LB400), this protein is Putative glutamate--cysteine ligase 2.